Reading from the N-terminus, the 648-residue chain is Serine/threonine-protein kinase DCLK3 (648 aa).

Disordered stretches follow at residues aspartate 86–valine 127 and glutamine 150–methionine 345. 5 stretches are compositionally biased toward basic and acidic residues: residues glycine 98–valine 127, glutamate 213–serine 234, glutamate 255–proline 266, leucine 277–proline 303, and threonine 312–serine 338. Residues tyrosine 356 to isoleucine 613 form the Protein kinase domain. Residues isoleucine 362–valine 370 and lysine 385 contribute to the ATP site. Catalysis depends on aspartate 477, which acts as the Proton acceptor. The segment at valine 628–serine 648 is disordered.

It belongs to the protein kinase superfamily. CAMK Ser/Thr protein kinase family. CaMK subfamily.

It localises to the cytoplasm. The protein resides in the nucleus. The catalysed reaction is L-seryl-[protein] + ATP = O-phospho-L-seryl-[protein] + ADP + H(+). It carries out the reaction L-threonyl-[protein] + ATP = O-phospho-L-threonyl-[protein] + ADP + H(+). This chain is Serine/threonine-protein kinase DCLK3 (DCLK3), found in Homo sapiens (Human).